The sequence spans 298 residues: GTP cyclohydrolase FolE2 (298 aa).

It belongs to the GTP cyclohydrolase IV family.

The catalysed reaction is GTP + H2O = 7,8-dihydroneopterin 3'-triphosphate + formate + H(+). The protein operates within cofactor biosynthesis; 7,8-dihydroneopterin triphosphate biosynthesis; 7,8-dihydroneopterin triphosphate from GTP: step 1/1. Converts GTP to 7,8-dihydroneopterin triphosphate. In Xylella fastidiosa (strain M23), this protein is GTP cyclohydrolase FolE2.